A 526-amino-acid chain; its full sequence is Histone-lysine N-methyltransferase SET5 (526 aa).

Residues 112–403 form the SET domain; the sequence is AKVEVKFIDD…KGEQIRITYV (292 aa). The segment at 450–492 is disordered; the sequence is NLGVEKIDSNDNSEDGSKKSTGNRKSSMREAQPDLKEILKNGK. The segment covering 476–492 has biased composition (basic and acidic residues); sequence SMREAQPDLKEILKNGK. Serine 517 carries the phosphoserine modification.

It belongs to the class V-like SAM-binding methyltransferase superfamily. Histone-lysine methyltransferase family. SET5 subfamily.

It is found in the nucleus. The protein localises to the chromosome. Its subcellular location is the cytoplasm. The enzyme catalyses L-lysyl-[histone] + S-adenosyl-L-methionine = N(6)-methyl-L-lysyl-[histone] + S-adenosyl-L-homocysteine + H(+). Histone methyltransferase that monomethylates 'Lys-5', 'Lys-8' and 'Lys-12' of histone H4 (H4K5me1, H4K8me1 and H4K12me1, respectively), thereby controlling gene expression and remodeling chromatin structures. The protein is Histone-lysine N-methyltransferase SET5 (SET5) of Saccharomyces cerevisiae (strain YJM789) (Baker's yeast).